The following is a 136-amino-acid chain: Small ribosomal subunit protein uS19 (136 aa).

This sequence belongs to the universal ribosomal protein uS19 family.

Its function is as follows. Protein S19 forms a complex with S13 that binds strongly to the 16S ribosomal RNA. The chain is Small ribosomal subunit protein uS19 from Methanosphaera stadtmanae (strain ATCC 43021 / DSM 3091 / JCM 11832 / MCB-3).